The following is a 1296-amino-acid chain: MKQQTEVKKRFKMYKAKKHWVVAPILFIGVLGVVGLATDDVQAAELDTQPGTTTVQPDNPDPQVGSTTPKTAVTEEATVQKDTTSQPTKVEEVASEKNGAEQSSATPNDTTNAQQPTVGAEKSAQEQPVVSPETTNEPLGQPTEVAPAENEANKSTSIPKEFETPDVDKAVDEAKKDPNITVVEKPAEDLGNVSSKDLAAKEKEVDQLQKEQAKKIAQQAAELKAKNEKIAKENAEIAAKNKAEKERYEKEVAEYNKHKNENGYVAKPVNKTLIFDREATKNSKVVSVKAAEYIDAKKLTDKHKDKKLLISMLSVDSSGLTTKDSKKAHFYYNNGAGGTLVVLHKNQPVTITYGNLNASYLGKKIASAEFQYTVKATPDSKGRLNAFLHDDPVATIVYGINIDPRTKKAGAEIEMLVRFFGEDGKEILPTKENPFVFSGASLNSRGENITYEFVKVGNTDTVHEINGSKVARHGNKVYSKTDIDVGTNGISISDWEAVQGKEYIGATVISTPNRIKFTFGNEIVNNPGYDGNSMWFAFNTDLKAKSITPYQEKGRPKQPEKATIEFNRYKANVVPVLVPNKEVTDGQKNINDLNVKRGDSLQYIVTGDTTELAKVDPKTVTKQGIRDTFDAEKVTIDLSKVKVYQADASLNEKDLKAVAAAINSGKAKDVTASYDLHLDQNTVTAMMKTNADDSVVLAMGYKYLLVLPFVVKNVEGDFENTAVQLTNDGETVTNTVINHVPGSNPSKDVKADKNGTVGSVSLHDKDIPLQTKIYYEVKSSERPANYGGITEEWGMNDVLDTTHDRFTGKWHAITNYDLKVGDKTLKAGTDISAYILLENKDNKDLTFTMNQALLAALNEGSNKVGKQAWSVYLEVERIKTGDVENTQTENYNKELVRSNTVVTHTPDDPKPTKAVHNKKGEDINHGKVARGDVLSYEMTWDLKGYDKDFAFDTVDLATGVSFFDDYDETKVTPIKDLLRVKDSKGEDITNQFTISWDDAKGTVTISAKDPQAFILAHGGQELRVTLPTKVKANVSGDVYNLAEQNTFGQRIKTNTVVNHIPKVNPKKDVVIKVGDKQSQNGATIKLGEKFFYEFTSSDIPAEYAGIVEEWSISDKLDVKHDKFSGQWSVFANSTFVLADGTKVNKGDDISKLFTMTFEQGVVKITASQAFLDAMNLKENKNVAHSWKAFIGVERIAAGDVYNTIEESFNNEKIKTNTVVTHTPEKPQTPPEKTVIVPPTPKTPQAPVEPLVVEKASVVPELPQTGEKQNVLLTVAGSLAAMLGLAGLGFKRRKETK.

Positions 1–43 (MKQQTEVKKRFKMYKAKKHWVVAPILFIGVLGVVGLATDDVQA) are cleaved as a signal peptide. Disordered regions lie at residues 48–188 (TQPG…KPAE) and 1221–1245 (HTPE…TPQA). Over residues 89 to 99 (KVEEVASEKNG) the composition is skewed to basic and acidic residues. Polar residues-rich tracts occupy residues 100–117 (AEQS…QQPT) and 125–138 (QEQP…TNEP). Residues 160 to 178 (KEFETPDVDKAVDEAKKDP) are compositionally biased toward basic and acidic residues. The short motif at 1261–1265 (LPQTG) is the LPXTG sorting signal element. Position 1264 is a pentaglycyl murein peptidoglycan amidated threonine (Thr-1264). Residues 1265-1296 (GEKQNVLLTVAGSLAAMLGLAGLGFKRRKETK) constitute a propeptide, removed by sortase.

The protein belongs to the antigen I/II family.

It localises to the secreted. Its subcellular location is the cell wall. Functionally, aggregation substance allows donor and recipient strains to form tight aggregates which allow the non-motile bacteria to maintain physical contact over a period of time sufficient to permit conjugative transfer of the sex pheromone plasmid from donor to recipient strains. This is Aggregation substance (asa1) from Enterococcus faecalis (strain ATCC 700802 / V583).